Consider the following 330-residue polypeptide: D-lactate dehydrogenase (330 aa).

NAD(+) contacts are provided by residues 156-157 (RI), D176, 206-207 (VP), 233-235 (AAR), and D259. R235 is a catalytic residue. Residue E264 is part of the active site. H296 functions as the Proton donor in the catalytic mechanism.

Belongs to the D-isomer specific 2-hydroxyacid dehydrogenase family.

The catalysed reaction is (R)-lactate + NAD(+) = pyruvate + NADH + H(+). The sequence is that of D-lactate dehydrogenase (ldhD) from Staphylococcus aureus.